Consider the following 473-residue polypeptide: FAD-dependent oxidoreductase dpasF (473 aa).

A signal peptide spans methionine 1–alanine 21. 7 N-linked (GlcNAc...) asparagine glycosylation sites follow: asparagine 26, asparagine 54, asparagine 92, asparagine 133, asparagine 185, asparagine 276, and asparagine 401.

Belongs to the beta-cyclopiazonate dehydrogenase family. The cofactor is FAD.

It functions in the pathway secondary metabolite biosynthesis; terpenoid biosynthesis. In terms of biological role, FAD-dependent oxidoreductase; part of the gene cluster that mediates the biosynthesis of the diterpenoid pyrones subglutinols A and B. The first step of the pathway is the synthesis of the alpha-pyrone moiety by the polyketide synthase dpasA via condensation of one acetyl-CoA starter unit with 3 malonyl-CoA units and 2 methylations. The alpha-pyrone is then combined with geranylgeranyl pyrophosphate (GGPP) formed by the GGPP synthase dpasD through the action of the prenyltransferase dpasC to yield a linear alpha-pyrone diterpenoid. Subsequent steps in the diterpenoid pyrone biosynthetic pathway involve the decalin core formation, which is initiated by the epoxidation of the C10-C11 olefin by the FAD-dependent oxidoreductase dpasE, and is followed by a cyclization cascade catalyzed by the terpene cyclase dpasB. The FAD-linked oxidoreductase dpasF is then involved in tetrahydrofuran (THF) ring formation at the C5 unit to complete the formation of subglutinols A and B. DpasF possesses also an additional catalytic ability of multi-step oxidations to generate a new DDP analog with an enone system at the C5 named FDDP A. This is FAD-dependent oxidoreductase dpasF from Apiospora sacchari (Arthrinium sacchari).